Here is a 79-residue protein sequence, read N- to C-terminus: MISLSLLLMIGVESVRDGYIVDFKNCVYRCVPPCDGLCKKNGGKGGSCSFLIGSGLACWCNALPDNVPIKDPLHKCPKR.

Residues methionine 1–aspartate 17 form the signal peptide. The region spanning glycine 18 to proline 77 is the LCN-type CS-alpha/beta domain. Intrachain disulfides connect cysteine 26–cysteine 76, cysteine 30–cysteine 48, cysteine 34–cysteine 58, and cysteine 38–cysteine 60.

The protein belongs to the long (4 C-C) scorpion toxin superfamily. Sodium channel inhibitor family. Alpha subfamily. As to expression, expressed by the venom gland.

The protein localises to the secreted. Its function is as follows. Alpha toxins bind voltage-independently at site-3 of sodium channels (Nav) and inhibit the inactivation of the activated channels, thereby blocking neuronal transmission. This protein is weakly toxic against insects (ED(50)&gt;2 ug per 100 mg of blowfly larvae), but is inactive against mammalian sodium channels (rNav1.2a, and rNav1.4). The polypeptide is Anti-insect Ac4 (Androctonus crassicauda (Arabian fat-tailed scorpion)).